The following is a 330-amino-acid chain: DNA primase small subunit PriS (330 aa).

Catalysis depends on residues Asp101 and Asp103. Positions 116, 119, 128, and 131 each coordinate Zn(2+). The active site involves Asp235.

It belongs to the eukaryotic-type primase small subunit family. Heterodimer of a small subunit (PriS) and a large subunit (PriL). Mg(2+) serves as cofactor. Mn(2+) is required as a cofactor.

In terms of biological role, catalytic subunit of DNA primase, an RNA polymerase that catalyzes the synthesis of short RNA molecules used as primers for DNA polymerase during DNA replication. The small subunit contains the primase catalytic core and has DNA synthesis activity on its own. Binding to the large subunit stabilizes and modulates the activity, increasing the rate of DNA synthesis while decreasing the length of the DNA fragments, and conferring RNA synthesis capability. The DNA polymerase activity may enable DNA primase to also catalyze primer extension after primer synthesis. May also play a role in DNA repair. The chain is DNA primase small subunit PriS from Saccharolobus islandicus (strain M.16.27) (Sulfolobus islandicus).